A 101-amino-acid polypeptide reads, in one-letter code: MFVKKGDKVRVIAGKDKGVEAVVLKALPKVNKVIVEGVAIIKKHQKPNSENPQGAIVEKEAPIHASNVQVLDKNGVAGRVGYKFVDGKKVRYNKKSGEVLD.

Belongs to the universal ribosomal protein uL24 family. As to quaternary structure, part of the 50S ribosomal subunit.

In terms of biological role, one of two assembly initiator proteins, it binds directly to the 5'-end of the 23S rRNA, where it nucleates assembly of the 50S subunit. One of the proteins that surrounds the polypeptide exit tunnel on the outside of the subunit. This chain is Large ribosomal subunit protein uL24, found in Streptococcus equi subsp. zooepidemicus (strain H70).